The sequence spans 250 residues: ATP synthase subunit a (250 aa).

6 helical membrane passes run 29-49 (ASLF…FATS), 84-104 (FFPM…LGMM), 114-134 (IVVT…YGFY), 143-163 (LFVP…IEVI), 189-209 (VFAG…GGAL), and 216-236 (VALT…FAVL).

Belongs to the ATPase A chain family. As to quaternary structure, F-type ATPases have 2 components, CF(1) - the catalytic core - and CF(0) - the membrane proton channel. CF(1) has five subunits: alpha(3), beta(3), gamma(1), delta(1), epsilon(1). CF(0) has three main subunits: a(1), b(2) and c(9-12). The alpha and beta chains form an alternating ring which encloses part of the gamma chain. CF(1) is attached to CF(0) by a central stalk formed by the gamma and epsilon chains, while a peripheral stalk is formed by the delta and b chains.

Its subcellular location is the cell inner membrane. Functionally, key component of the proton channel; it plays a direct role in the translocation of protons across the membrane. This chain is ATP synthase subunit a, found in Allorhizobium ampelinum (strain ATCC BAA-846 / DSM 112012 / S4) (Agrobacterium vitis (strain S4)).